A 201-amino-acid polypeptide reads, in one-letter code: FMN-dependent NADH:quinone oxidoreductase (201 aa).

FMN is bound by residues serine 10, 16–18 (SQS), 96–99 (MYNF), and 140–143 (SRGG).

Belongs to the azoreductase type 1 family. In terms of assembly, homodimer. It depends on FMN as a cofactor.

The enzyme catalyses 2 a quinone + NADH + H(+) = 2 a 1,4-benzosemiquinone + NAD(+). It catalyses the reaction N,N-dimethyl-1,4-phenylenediamine + anthranilate + 2 NAD(+) = 2-(4-dimethylaminophenyl)diazenylbenzoate + 2 NADH + 2 H(+). Functionally, quinone reductase that provides resistance to thiol-specific stress caused by electrophilic quinones. Also exhibits azoreductase activity. Catalyzes the reductive cleavage of the azo bond in aromatic azo compounds to the corresponding amines. In Yersinia enterocolitica serotype O:8 / biotype 1B (strain NCTC 13174 / 8081), this protein is FMN-dependent NADH:quinone oxidoreductase.